The primary structure comprises 433 residues: Glucoside xylosyltransferase 1 (433 aa).

Topologically, residues 1–6 are cytoplasmic; sequence MRRFAR. Residues 7-29 form a helical; Signal-anchor for type II membrane protein membrane-spanning segment; the sequence is VALLFLGCGVCSLLYGVSQLALS. The Lumenal portion of the chain corresponds to 30–433; that stretch reads LEQEAGGARQ…DLSVRRSKGS (404 aa). A disordered region spans residues 39 to 64; the sequence is QRQARESAAPGGGRQAGSADGGEEGA. N-linked (GlcNAc...) asparagine glycosylation is found at N69, N166, N271, N305, and N380.

This sequence belongs to the glycosyltransferase 8 family.

Its subcellular location is the membrane. The catalysed reaction is 3-O-(beta-D-glucosyl)-L-seryl-[EGF-like domain protein] + UDP-alpha-D-xylose = 3-O-[alpha-D-xylosyl-(1-&gt;3)-beta-D-glucosyl]-L-seryl-[EGF-like domain protein] + UDP + H(+). Functionally, glycosyltransferase which elongates the O-linked glucose attached to EGF-like repeats in the extracellular domain of Notch proteins by catalyzing the addition of xylose. This Gallus gallus (Chicken) protein is Glucoside xylosyltransferase 1 (GXYLT1).